Consider the following 599-residue polypeptide: CAP-Gly domain-containing linker protein 4 (599 aa).

ANK repeat units lie at residues 65–101 (TSVS…NVND), 149–180 (TNMN…DVDA), and 186–215 (NFGT…NPAF). Positions 303 to 345 (GTTEFASGQWAGIELDEPEGKNNGSVGRVQYFKCAPKYGIFAP) constitute a CAP-Gly 1 domain. Positions 387–482 (SGLMTSKKEN…TSAANNTHRE (96 aa)) are disordered. Residues 443-462 (LSTSSSSGKKTLSKSPSLPS) are compositionally biased toward low complexity. The segment covering 468 to 478 (LKSSTTSAANN) has biased composition (polar residues). Residues 505–547 (GTTNFAPGYWYGIELEKPHGKNDGSVGGVQYFSCSPRYGIFAP) form the CAP-Gly 2 domain. A Phosphoserine modification is found at Ser-557. The tract at residues 565 to 599 (SSNKQNHSYPGFRRSFSTTSASSQKEINRRNAFAK) is disordered. Over residues 576 to 587 (FRRSFSTTSASS) the composition is skewed to low complexity.

The protein is CAP-Gly domain-containing linker protein 4 (Clip4) of Rattus norvegicus (Rat).